Consider the following 467-residue polypeptide: Uronate isomerase (467 aa).

This sequence belongs to the metallo-dependent hydrolases superfamily. Uronate isomerase family.

It catalyses the reaction D-glucuronate = D-fructuronate. It carries out the reaction aldehydo-D-galacturonate = keto-D-tagaturonate. The protein operates within carbohydrate metabolism; pentose and glucuronate interconversion. In Geobacillus thermodenitrificans (strain NG80-2), this protein is Uronate isomerase.